A 103-amino-acid chain; its full sequence is Small ribosomal subunit protein uS14c (103 aa).

The protein belongs to the universal ribosomal protein uS14 family. As to quaternary structure, part of the 30S ribosomal subunit.

It localises to the plastid. It is found in the chloroplast. Functionally, binds 16S rRNA, required for the assembly of 30S particles. The chain is Small ribosomal subunit protein uS14c from Oryza nivara (Indian wild rice).